The sequence spans 277 residues: Co-chaperone protein DjlA (277 aa).

The Periplasmic segment spans residues Met-1–Lys-6. Residues Leu-7–His-31 traverse the membrane as a helical segment. Topologically, residues Met-32 to Lys-277 are cytoplasmic. The J domain occupies Asp-211–Lys-277.

In terms of assembly, homodimer.

It is found in the cell inner membrane. In terms of biological role, regulatory DnaK co-chaperone. Direct interaction between DnaK and DjlA is needed for the induction of the wcaABCDE operon, involved in the synthesis of a colanic acid polysaccharide capsule, possibly through activation of the RcsB/RcsC phosphotransfer signaling pathway. The colanic acid capsule may help the bacterium survive conditions outside the host. The polypeptide is Co-chaperone protein DjlA (Yersinia pseudotuberculosis serotype I (strain IP32953)).